Reading from the N-terminus, the 374-residue chain is GDSL esterase/lipase At1g71250 (374 aa).

The N-terminal stretch at 1–28 (MNTNRKKMKVHIGGYVLILALTVSVILQ) is a signal peptide. Residue Ser-48 is the Nucleophile of the active site. Asn-162 is a glycosylation site (N-linked (GlcNAc...) asparagine). Active-site residues include Asp-338 and His-341.

It belongs to the 'GDSL' lipolytic enzyme family.

Its subcellular location is the secreted. The protein is GDSL esterase/lipase At1g71250 of Arabidopsis thaliana (Mouse-ear cress).